The chain runs to 245 residues: 1-(5-phosphoribosyl)-5-[(5-phosphoribosylamino)methylideneamino] imidazole-4-carboxamide isomerase (245 aa).

The active-site Proton acceptor is the aspartate 7. The active-site Proton donor is the aspartate 129.

The protein belongs to the HisA/HisF family.

The protein resides in the cytoplasm. The enzyme catalyses 1-(5-phospho-beta-D-ribosyl)-5-[(5-phospho-beta-D-ribosylamino)methylideneamino]imidazole-4-carboxamide = 5-[(5-phospho-1-deoxy-D-ribulos-1-ylimino)methylamino]-1-(5-phospho-beta-D-ribosyl)imidazole-4-carboxamide. Its pathway is amino-acid biosynthesis; L-histidine biosynthesis; L-histidine from 5-phospho-alpha-D-ribose 1-diphosphate: step 4/9. This chain is 1-(5-phosphoribosyl)-5-[(5-phosphoribosylamino)methylideneamino] imidazole-4-carboxamide isomerase, found in Citrobacter koseri (strain ATCC BAA-895 / CDC 4225-83 / SGSC4696).